A 377-amino-acid chain; its full sequence is Chaperone protein DnaJ (377 aa).

The J domain occupies 5 to 70 (DYYQVLGVAK…QKRAAYDQYG (66 aa)). Residues 137-215 (GYDTQIRVPS…CHGAGKTKET (79 aa)) form a CR-type zinc finger. Residues C150, C153, C167, C170, C189, C192, C203, and C206 each coordinate Zn(2+). 4 CXXCXGXG motif repeats span residues 150-157 (CEICHGSG), 167-174 (CPTCNGSG), 189-196 (CPKCHGTG), and 203-210 (CTHCHGAG).

It belongs to the DnaJ family. In terms of assembly, homodimer. Requires Zn(2+) as cofactor.

It localises to the cytoplasm. Functionally, participates actively in the response to hyperosmotic and heat shock by preventing the aggregation of stress-denatured proteins and by disaggregating proteins, also in an autonomous, DnaK-independent fashion. Unfolded proteins bind initially to DnaJ; upon interaction with the DnaJ-bound protein, DnaK hydrolyzes its bound ATP, resulting in the formation of a stable complex. GrpE releases ADP from DnaK; ATP binding to DnaK triggers the release of the substrate protein, thus completing the reaction cycle. Several rounds of ATP-dependent interactions between DnaJ, DnaK and GrpE are required for fully efficient folding. Also involved, together with DnaK and GrpE, in the DNA replication of plasmids through activation of initiation proteins. The polypeptide is Chaperone protein DnaJ (Paraburkholderia phymatum (strain DSM 17167 / CIP 108236 / LMG 21445 / STM815) (Burkholderia phymatum)).